Here is a 644-residue protein sequence, read N- to C-terminus: Exoribonuclease 2 (644 aa).

The RNB domain occupies 189 to 516; sequence REDLTALDFV…NHRLLKAVIK (328 aa). Residues 561-643 form the S1 motif domain; that stretch reads GTRFAAEIVD…ETRGIIARPV (83 aa).

Belongs to the RNR ribonuclease family. RNase II subfamily.

The protein localises to the cytoplasm. It catalyses the reaction Exonucleolytic cleavage in the 3'- to 5'-direction to yield nucleoside 5'-phosphates.. In terms of biological role, involved in mRNA degradation. Hydrolyzes single-stranded polyribonucleotides processively in the 3' to 5' direction. This is Exoribonuclease 2 from Shigella sonnei (strain Ss046).